The primary structure comprises 902 residues: Respiratory burst oxidase homolog protein A (902 aa).

The Cytoplasmic portion of the chain corresponds to 1–344; it reads MMNRSEMQKL…KYFLFDNWKR (344 aa). Disordered regions lie at residues 63–87 and 107–130; these read KSPNHRGAGSNYEDQSLLRQGRSGR and ASSVSSSSARKPPRPQLAKLRRSK. Polar residues predominate over residues 74 to 87; it reads YEDQSLLRQGRSGR. Positions 107–116 are enriched in low complexity; sequence ASSVSSSSAR. EF-hand-like stretches follow at residues 163-173 and 198-209; these read TMTTNGLLHRS and ENVSGDSININE. 2 consecutive EF-hand domains span residues 221–256 and 265–300; these read DFDSRLRTFFAMVDKDSDGRLNEAEVREIITLSASA and QADEYAALIMEELDPYHYGYIMIENLEILLLQAPMQ. D234, D236, D238, R240, and E245 together coordinate Ca(2+). Residues S311 and S315 each carry the phosphoserine modification. The helical transmembrane segment at 345 to 365 threads the bilayer; the sequence is VWVMALWIGAMAGLFTWKFME. Topologically, residues 366 to 380 are extracellular; sequence YRKRSAYEVMGVCVC. The chain crosses the membrane as a helical span at residues 381–401; that stretch reads IAKGAAETLKLNMAMILLPVC. The Ferric oxidoreductase domain occupies 383–540; that stretch reads KGAAETLKLN…LFVIVYSLLV (158 aa). The Cytoplasmic portion of the chain corresponds to 402–428; it reads RNTITWLRTKTKLSAIVPFDDSLNFHK. Residues 429–449 traverse the membrane as a helical segment; that stretch reads VIAIGISVGVGIHATSHLACD. At 450–484 the chain is on the extracellular side; it reads FPRLIAADEDQYEPMEKYFGPQTKRYLDFVQSVEG. Residues 485–505 form a helical membrane-spanning segment; sequence VTGIGMVVLMTIAFTLATTWF. Residues 506–529 are Cytoplasmic-facing; that stretch reads RRNKLNLPGPLKKITGFNAFWYSH. Residues 530–550 form a helical membrane-spanning segment; that stretch reads HLFVIVYSLLVVHGFYVYLII. Residues 551–709 lie on the Extracellular side of the membrane; the sequence is EPWYKKTTWM…PAQDYKKFEV (159 aa). In terms of domain architecture, FAD-binding FR-type spans 575–703; it reads IRAFRSSVEA…DGPYGAPAQD (129 aa). A helical membrane pass occupies residues 710 to 730; the sequence is VLLVGLGIGATPMISIVSDII. Residues 731 to 902 are Cytoplasmic-facing; that stretch reads NNLKGVEEGS…TKFIFHKENF (172 aa). Residues 738 to 760 form a disordered region; sequence EGSNRRQSPIHNMVTPPVSPSRK.

This sequence belongs to the RBOH (TC 5.B.1.3) family. As to quaternary structure, monomer and homodimer.

The protein localises to the membrane. In terms of biological role, calcium-dependent NADPH oxidase that generates superoxide. The polypeptide is Respiratory burst oxidase homolog protein A (RBOHA) (Arabidopsis thaliana (Mouse-ear cress)).